Consider the following 355-residue polypeptide: NADH dehydrogenase [ubiquinone] 1 alpha subcomplex subunit 10, mitochondrial (355 aa).

The N-terminal 35 residues, 1–35 (MALRLLKLAATSASARVVAAGAQRVRGIHSSVQCK), are a transit peptide targeting the mitochondrion. Phosphoserine; by PINK1 is present on Ser250. N6-succinyllysine is present on Lys285.

The protein belongs to the complex I NDUFA10 subunit family. As to quaternary structure, complex I is composed of 45 different subunits. This a component of the hydrophobic protein fraction. It depends on FAD as a cofactor. Phosphorylation at Ser-250 by PINK1 is required for the binding and/or reduction of the complex I substrate ubiquinone.

It is found in the mitochondrion matrix. Its function is as follows. Accessory subunit of the mitochondrial membrane respiratory chain NADH dehydrogenase (Complex I), that is believed not to be involved in catalysis. Complex I functions in the transfer of electrons from NADH to the respiratory chain. The immediate electron acceptor for the enzyme is believed to be ubiquinone. This chain is NADH dehydrogenase [ubiquinone] 1 alpha subcomplex subunit 10, mitochondrial (NDUFA10), found in Homo sapiens (Human).